Consider the following 507-residue polypeptide: Nuclear distribution protein PAC1 (507 aa).

Residues 72 to 98 (STVLRLQRKIMDLTDEVSNLKTIIEAK) are a coiled coil. WD repeat units lie at residues 125 to 164 (QTHQ…PSIP), 170 to 222 (AHSR…QIRI), 225 to 265 (GHDH…CTRT), 268 to 312 (GHSD…GLCL), 315 to 389 (GHSH…VRPN), 410 to 449 (GHQS…TGGR), and 474 to 507 (PKDT…RLWS).

It belongs to the WD repeat LIS1/nudF family. As to quaternary structure, self-associates. Interacts with NDL1 and dynein.

The protein resides in the cytoplasm. Its subcellular location is the cytoskeleton. The protein localises to the spindle pole. In terms of biological role, positively regulates the activity of the minus-end directed microtubule motor protein dynein. Plays a central role in positioning the mitotic spindle at the bud neck during cell division. Targets cytoplasmic dynein to microtubule plus ends, thereby promoting dynein-mediated microtubule sliding along the bud cortex and consequently the movement of the mitotic spindle to the bud neck. This Meyerozyma guilliermondii (strain ATCC 6260 / CBS 566 / DSM 6381 / JCM 1539 / NBRC 10279 / NRRL Y-324) (Yeast) protein is Nuclear distribution protein PAC1.